Here is a 236-residue protein sequence, read N- to C-terminus: GTP cyclohydrolase 1 (236 aa).

Positions Met1 to Leu52 are disordered. Residues Cys127, His130, and Cys198 each contribute to the Zn(2+) site.

Belongs to the GTP cyclohydrolase I family. Toroid-shaped homodecamer, composed of two pentamers of five dimers.

It localises to the cytoplasm. It is found in the nucleus. It catalyses the reaction GTP + H2O = 7,8-dihydroneopterin 3'-triphosphate + formate + H(+). Its pathway is cofactor biosynthesis; 7,8-dihydroneopterin triphosphate biosynthesis; 7,8-dihydroneopterin triphosphate from GTP: step 1/1. With respect to regulation, GTP shows a positive allosteric effect, and tetrahydrobiopterin inhibits the enzyme activity. Zinc is required for catalytic activity. Inhibited by Mg(2+). In terms of biological role, may positively regulate nitric oxide synthesis in endothelial cells. May be involved in dopamine synthesis. May modify pain sensitivity and persistence. This chain is GTP cyclohydrolase 1 (GCH1), found in Gallus gallus (Chicken).